We begin with the raw amino-acid sequence, 656 residues long: Chaperone protein DnaK (656 aa).

Residues 590-605 are compositionally biased toward gly residues; that stretch reads GGAAGGAAGGAAGGAA. Residues 590 to 656 form a disordered region; it reads GGAAGGAAGG…DGQPKPGPAA (67 aa). The span at 606 to 621 shows a compositional bias: low complexity; sequence GDAAGAAGDSTGDAAG. Positions 622–635 are enriched in gly residues; sequence AAGGPSEGPAGDAG.

It belongs to the heat shock protein 70 family.

Acts as a chaperone. The protein is Chaperone protein DnaK of Cenarchaeum symbiosum (strain A).